We begin with the raw amino-acid sequence, 674 residues long: PTS system glucose-specific EIIBCA component (674 aa).

The PTS EIIB type-1 domain maps to 1–89 (MASKLTTTSQ…LKLDGMKHFA (89 aa)). Cysteine 28 functions as the Phosphocysteine intermediate; for EIIB activity in the catalytic mechanism. The 360-residue stretch at 117 to 476 (EFLSDTFRPI…DAERDEAKAQ (360 aa)) folds into the PTS EIIC type-1 domain. The next 10 membrane-spanning stretches (helical) occupy residues 126–146 (ILWA…ADTF), 162–182 (YVFL…MVGA), 193–213 (WIGA…LGSA), 225–245 (VLND…GLYW), 260–280 (MVFV…FLLG), 303–323 (FILS…GLHW), 344–364 (PMGA…LIAL), 376–396 (LGGM…YGVL), 409–429 (GCLV…AFVF), and 442–462 (LGYT…VLFF). In terms of domain architecture, PTS EIIA type-1 spans 542–646 (DPIFAAGKLG…PLITPVVVSN (105 aa)). Catalysis depends on histidine 594, which acts as the Tele-phosphohistidine intermediate; for EIIA activity.

The protein resides in the cell membrane. The enzyme catalyses N(pros)-phospho-L-histidyl-[protein] + D-glucose(out) = D-glucose 6-phosphate(in) + L-histidyl-[protein]. Functionally, the phosphoenolpyruvate-dependent sugar phosphotransferase system (sugar PTS), a major carbohydrate active transport system, catalyzes the phosphorylation of incoming sugar substrates concomitantly with their translocation across the cell membrane. This system is involved in glucose transport. This chain is PTS system glucose-specific EIIBCA component (ptsG), found in Corynebacterium glutamicum (Brevibacterium saccharolyticum).